The primary structure comprises 371 residues: Putative HAD-like hydrolase Noc_2718 (371 aa).

Residues 1–288 (MKQKILLCSD…TGREESAEEE (288 aa)) form an HAD-like hydrolase region. The 81-residue stretch at 291-371 (QSCAIYRSCK…QLSSREYRRS (81 aa)) folds into the YcgL domain.

The protein in the N-terminal section; belongs to the HAD-like hydrolase superfamily.

The polypeptide is Putative HAD-like hydrolase Noc_2718 (Nitrosococcus oceani (strain ATCC 19707 / BCRC 17464 / JCM 30415 / NCIMB 11848 / C-107)).